Here is a 170-residue protein sequence, read N- to C-terminus: Der GTPase-activating protein YihI (170 aa).

Disordered regions lie at residues 1–96 (MKKP…LSPQ) and 145–170 (LSYDDEEDEEEDEKQEDMMRLLRGGN). Residues 20 to 30 (TREELNQEARD) show a composition bias toward basic and acidic residues. Residues 31 to 40 (RKRLKKHRGH) show a composition bias toward basic residues. The segment covering 147-159 (YDDEEDEEEDEKQ) has biased composition (acidic residues).

It belongs to the YihI family. In terms of assembly, interacts with Der.

In terms of biological role, a GTPase-activating protein (GAP) that modifies Der/EngA GTPase function. May play a role in ribosome biogenesis. In Salmonella arizonae (strain ATCC BAA-731 / CDC346-86 / RSK2980), this protein is Der GTPase-activating protein YihI.